The primary structure comprises 699 residues: Elongation factor G 1 (699 aa).

Residues 8 to 290 (ERYRNIGICA…AVIEYLPSPT (283 aa)) form the tr-type G domain. Residues 17-24 (AHVDAGKT), 88-92 (DTPGH), and 142-145 (NKMD) contribute to the GTP site.

Belongs to the TRAFAC class translation factor GTPase superfamily. Classic translation factor GTPase family. EF-G/EF-2 subfamily.

The protein resides in the cytoplasm. Catalyzes the GTP-dependent ribosomal translocation step during translation elongation. During this step, the ribosome changes from the pre-translocational (PRE) to the post-translocational (POST) state as the newly formed A-site-bound peptidyl-tRNA and P-site-bound deacylated tRNA move to the P and E sites, respectively. Catalyzes the coordinated movement of the two tRNA molecules, the mRNA and conformational changes in the ribosome. This chain is Elongation factor G 1, found in Hahella chejuensis (strain KCTC 2396).